The following is a 281-amino-acid chain: 3-methyl-2-oxobutanoate hydroxymethyltransferase (281 aa).

Mg(2+) is bound by residues Asp-44 and Asp-83. 3-methyl-2-oxobutanoate-binding positions include Asp-44 to Ser-45, Asp-83, and Lys-112. Mg(2+) is bound at residue Glu-114. Residue Glu-180 is the Proton acceptor of the active site. The tract at residues Arg-251–Glu-281 is disordered.

The protein belongs to the PanB family. Homodecamer; pentamer of dimers. Requires Mg(2+) as cofactor.

It localises to the cytoplasm. It carries out the reaction 3-methyl-2-oxobutanoate + (6R)-5,10-methylene-5,6,7,8-tetrahydrofolate + H2O = 2-dehydropantoate + (6S)-5,6,7,8-tetrahydrofolate. The protein operates within cofactor biosynthesis; (R)-pantothenate biosynthesis; (R)-pantoate from 3-methyl-2-oxobutanoate: step 1/2. Functionally, catalyzes the reversible reaction in which hydroxymethyl group from 5,10-methylenetetrahydrofolate is transferred onto alpha-ketoisovalerate to form ketopantoate. The polypeptide is 3-methyl-2-oxobutanoate hydroxymethyltransferase (Chloroflexus aurantiacus (strain ATCC 29364 / DSM 637 / Y-400-fl)).